Here is a 107-residue protein sequence, read N- to C-terminus: Age-related maculopathy susceptibility protein 2 (107 aa).

A disordered region spans residues 1–21; sequence MLRLYPGPMVTEAEGKGGPEM.

As to expression, detected in retina and placenta.

The protein resides in the cytoplasm. In Homo sapiens (Human), this protein is Age-related maculopathy susceptibility protein 2 (ARMS2).